A 269-amino-acid chain; its full sequence is Zinc transporter ZupT (269 aa).

Transmembrane regions (helical) follow at residues 11–31 (IALA…LLVL), 40–60 (LLAF…LSEI), 80–100 (YGTL…HFIP), 125–145 (ALLT…ATFF), 158–178 (AFAI…PVYF), 187–207 (FSAS…GYWL), 217–237 (FGWV…DELL), and 249–269 (TVYG…LFKW). Fe(2+)-binding residues include N136 and E139. E139 and H164 together coordinate Zn(2+). 3 residues coordinate Fe(2+): N165, E168, and E197. E168 provides a ligand contact to Zn(2+).

Belongs to the ZIP transporter (TC 2.A.5) family. ZupT subfamily.

It localises to the cell inner membrane. The catalysed reaction is Zn(2+)(in) = Zn(2+)(out). Functionally, mediates zinc uptake. May also transport other divalent cations. This Stenotrophomonas maltophilia (strain R551-3) protein is Zinc transporter ZupT.